A 241-amino-acid polypeptide reads, in one-letter code: Glucosamine-6-phosphate deaminase (241 aa).

Asp-67 (proton acceptor; for enolization step) is an active-site residue. Residue Asn-136 is the For ring-opening step of the active site. His-138 acts as the Proton acceptor; for ring-opening step in catalysis. Glu-143 functions as the For ring-opening step in the catalytic mechanism.

This sequence belongs to the glucosamine/galactosamine-6-phosphate isomerase family. NagB subfamily.

It catalyses the reaction alpha-D-glucosamine 6-phosphate + H2O = beta-D-fructose 6-phosphate + NH4(+). Its pathway is amino-sugar metabolism; N-acetylneuraminate degradation; D-fructose 6-phosphate from N-acetylneuraminate: step 5/5. Its function is as follows. Catalyzes the reversible isomerization-deamination of glucosamine 6-phosphate (GlcN6P) to form fructose 6-phosphate (Fru6P) and ammonium ion. This chain is Glucosamine-6-phosphate deaminase, found in Bacillus pumilus (strain SAFR-032).